The primary structure comprises 235 residues: Uridylate kinase (235 aa).

An ATP-binding site is contributed by 8–11 (KLSG). Gly-49 contacts UMP. Residues Gly-50 and Arg-54 each contribute to the ATP site. Residue 131–138 (TGNPYFST) coordinates UMP. The ATP site is built by Asn-159, Tyr-165, and Asp-168.

It belongs to the UMP kinase family. In terms of assembly, homohexamer.

It localises to the cytoplasm. It catalyses the reaction UMP + ATP = UDP + ADP. The protein operates within pyrimidine metabolism; CTP biosynthesis via de novo pathway; UDP from UMP (UMPK route): step 1/1. With respect to regulation, inhibited by UTP. In terms of biological role, catalyzes the reversible phosphorylation of UMP to UDP. The sequence is that of Uridylate kinase from Mycoplasma pneumoniae (strain ATCC 29342 / M129 / Subtype 1) (Mycoplasmoides pneumoniae).